We begin with the raw amino-acid sequence, 192 residues long: Putative molybdenum cofactor guanylyltransferase (192 aa).

GTP-binding positions include 8-10 (LAG), Lys21, Asp67, and Asp101. Asp101 provides a ligand contact to Mg(2+).

The protein belongs to the MobA family. In terms of assembly, monomer. Mg(2+) serves as cofactor.

The protein resides in the cytoplasm. It catalyses the reaction Mo-molybdopterin + GTP + H(+) = Mo-molybdopterin guanine dinucleotide + diphosphate. Its function is as follows. Transfers a GMP moiety from GTP to Mo-molybdopterin (Mo-MPT) cofactor (Moco or molybdenum cofactor) to form Mo-molybdopterin guanine dinucleotide (Mo-MGD) cofactor. In Neisseria meningitidis serogroup B (strain ATCC BAA-335 / MC58), this protein is Putative molybdenum cofactor guanylyltransferase.